The primary structure comprises 588 residues: Nucleoporin ndc-1 (588 aa).

Residues 1-12 (MMGDSHSSFTTT) are compositionally biased toward polar residues. The disordered stretch occupies residues 1–55 (MMGDSHSSFTTTTDEHLYNQFSPGRRKNDFPAASSSSSSPNLRRSPNRTVSSPRV). The Cytoplasmic portion of the chain corresponds to 1–79 (MMGDSHSSFT…FQAEISVRKR (79 aa)). Residues 31 to 48 (PAASSSSSSPNLRRSPNR) are compositionally biased toward low complexity. The chain crosses the membrane as a helical span at residues 80 to 100 (LAGAACGYLSTIFFIVTVSIL). The Perinuclear space portion of the chain corresponds to 101 to 122 (KLTIWAPFSSVQDSLAWWIYPN). A helical membrane pass occupies residues 123–143 (AWASIIFVGIASVAMSLFSII). The Cytoplasmic segment spans residues 144–159 (KFCKVDQLPRLAATDT). A helical transmembrane segment spans residues 160 to 180 (FALAGVALEFVTRLTFVYTAF). Residues 181–190 (CVADFSFSRE) are Perinuclear space-facing. Residues 191–211 (FAFVAISLAIAISSALVVFRS) form a helical membrane-spanning segment. Over 212–255 (DYQLNFSHIQVNSVKTLIDFGTSLPYANISEICGIDAAISYTAA) the chain is Cytoplasmic. Residues 256 to 276 (VALILVVGPMVSGFSAWWLLL) traverse the membrane as a helical segment. Position 277 (asparagine 277) is a topological domain, perinuclear space. A helical membrane pass occupies residues 278-298 (IPFHVVLFGLCFTQQFYSKIS). Residues 299 to 588 (MKIVNQIVMK…IRMICLTDEL (290 aa)) are Cytoplasmic-facing.

It belongs to the NDC1 family.

It is found in the nucleus. The protein resides in the nuclear pore complex. Its subcellular location is the nucleus membrane. Component of the nuclear pore complex (NPC), which plays a key role in de novo assembly and insertion of NPC in the nuclear envelope. Plays a role in postmitotic nuclear pore complex assembly potentially by promoting localization of nuclear pore complex proteins to the nuclear rim. This chain is Nucleoporin ndc-1, found in Caenorhabditis elegans.